A 196-amino-acid polypeptide reads, in one-letter code: dITP/XTP pyrophosphatase (196 aa).

10–15 (TTNPHK) contributes to the substrate binding site. Residue Asp68 is the Proton acceptor of the active site. Asp68 is a Mg(2+) binding site. Substrate is bound by residues Ser69, 148 to 151 (FGYD), and 175 to 176 (HR).

The protein belongs to the HAM1 NTPase family. Homodimer. Mg(2+) serves as cofactor.

It carries out the reaction XTP + H2O = XMP + diphosphate + H(+). The enzyme catalyses dITP + H2O = dIMP + diphosphate + H(+). The catalysed reaction is ITP + H2O = IMP + diphosphate + H(+). In terms of biological role, pyrophosphatase that catalyzes the hydrolysis of nucleoside triphosphates to their monophosphate derivatives, with a high preference for the non-canonical purine nucleotides XTP (xanthosine triphosphate), dITP (deoxyinosine triphosphate) and ITP. Seems to function as a house-cleaning enzyme that removes non-canonical purine nucleotides from the nucleotide pool, thus preventing their incorporation into DNA/RNA and avoiding chromosomal lesions. This Thermotoga maritima (strain ATCC 43589 / DSM 3109 / JCM 10099 / NBRC 100826 / MSB8) protein is dITP/XTP pyrophosphatase.